A 228-amino-acid chain; its full sequence is MSVSEIFVELQGFLAAEQDIREEIRKVVQSLEQTAREILTLLQGVHQGAGFQDIPKRCLKAREHFGTVKTHLTSLKTKFPAEQYYRFHEHWRFVLQRLVFLAAFVVYLETETLVTREAVTEILGMEPDREKGFHLDVEDYLSGVLILASELSRLSVNSVTAGDYSRPLHISTFINELDSGFRLLNLKNDSLRKRYDGLKYDVKKVEEVVYDLSIRGFNKETAAACVEK.

A DNA/RNA binding region spans residues 86–90; the sequence is RFHEH. The interval 177–198 is leucine-zipper; it reads LDSGFRLLNLKNDSLRKRYDGL. K187 bears the N6-acetyllysine mark. The residue at position 190 (S190) is a Phosphoserine. K199 is subject to N6-acetyllysine.

It belongs to the translin family. Ring-shaped heterooctamer of six TSN and two TSNAX subunits, DNA/RNA binding occurs inside the ring.

It is found in the cytoplasm. The protein localises to the nucleus. Its function is as follows. DNA-binding protein that specifically recognizes consensus sequences at the breakpoint junctions in chromosomal translocations, mostly involving immunoglobulin (Ig)/T-cell receptor gene segments. Seems to recognize single-stranded DNA ends generated by staggered breaks occurring at recombination hot spots. Exhibits both single-stranded and double-stranded endoribonuclease activity. May act as an activator of RNA-induced silencing complex (RISC) by facilitating endonucleolytic cleavage of the siRNA passenger strand. This is Translin (TSN) from Pongo abelii (Sumatran orangutan).